The sequence spans 294 residues: Putative glutamine amidotransferase HI_1037 (294 aa).

Cys-18 is an active-site residue. Positions 18–266 (CQLLGMNCNT…NGGFVFFKNG (249 aa)) constitute a Glutamine amidotransferase type-2 domain.

This is Putative glutamine amidotransferase HI_1037 from Haemophilus influenzae (strain ATCC 51907 / DSM 11121 / KW20 / Rd).